The sequence spans 211 residues: MKNVDYKLYLVTDRKVLKERDLYKSIEEAIKGGVTLVQLREKEMSTLDFYESALKLKKITETYKIPLIINDRIDIALAINADGVHIGQSDMPLIKARELLGKDKIIGVSAHSIEEALEAERNGATYLGVGAIYNTSTKGDAQAVSLEELKNIKNSVKIPVVGIGGINEENANKVIETGVDGISVISGILSAQKIKDKARVMFDIVKKNSTK.

4-amino-2-methyl-5-(diphosphooxymethyl)pyrimidine-binding positions include 38 to 42 (QLREK) and N70. Residues D71 and D90 each coordinate Mg(2+). Position 109 (S109) interacts with 4-amino-2-methyl-5-(diphosphooxymethyl)pyrimidine. 135 to 137 (TST) is a binding site for 2-[(2R,5Z)-2-carboxy-4-methylthiazol-5(2H)-ylidene]ethyl phosphate. K138 provides a ligand contact to 4-amino-2-methyl-5-(diphosphooxymethyl)pyrimidine. Residues G165 and 185–186 (IS) contribute to the 2-[(2R,5Z)-2-carboxy-4-methylthiazol-5(2H)-ylidene]ethyl phosphate site.

Belongs to the thiamine-phosphate synthase family. Requires Mg(2+) as cofactor.

The enzyme catalyses 2-[(2R,5Z)-2-carboxy-4-methylthiazol-5(2H)-ylidene]ethyl phosphate + 4-amino-2-methyl-5-(diphosphooxymethyl)pyrimidine + 2 H(+) = thiamine phosphate + CO2 + diphosphate. The catalysed reaction is 2-(2-carboxy-4-methylthiazol-5-yl)ethyl phosphate + 4-amino-2-methyl-5-(diphosphooxymethyl)pyrimidine + 2 H(+) = thiamine phosphate + CO2 + diphosphate. It carries out the reaction 4-methyl-5-(2-phosphooxyethyl)-thiazole + 4-amino-2-methyl-5-(diphosphooxymethyl)pyrimidine + H(+) = thiamine phosphate + diphosphate. The protein operates within cofactor biosynthesis; thiamine diphosphate biosynthesis; thiamine phosphate from 4-amino-2-methyl-5-diphosphomethylpyrimidine and 4-methyl-5-(2-phosphoethyl)-thiazole: step 1/1. Its function is as follows. Condenses 4-methyl-5-(beta-hydroxyethyl)thiazole monophosphate (THZ-P) and 2-methyl-4-amino-5-hydroxymethyl pyrimidine pyrophosphate (HMP-PP) to form thiamine monophosphate (TMP). The sequence is that of Thiamine-phosphate synthase from Clostridium acetobutylicum (strain ATCC 824 / DSM 792 / JCM 1419 / IAM 19013 / LMG 5710 / NBRC 13948 / NRRL B-527 / VKM B-1787 / 2291 / W).